Reading from the N-terminus, the 142-residue chain is Large ribosomal subunit protein bL17 (142 aa).

The protein belongs to the bacterial ribosomal protein bL17 family. As to quaternary structure, part of the 50S ribosomal subunit. Contacts protein L32.

The chain is Large ribosomal subunit protein bL17 from Chlamydia caviae (strain ATCC VR-813 / DSM 19441 / 03DC25 / GPIC) (Chlamydophila caviae).